Reading from the N-terminus, the 326-residue chain is Ankyrin repeat domain-containing protein 9 (326 aa).

Positions 1-20 are disordered; that stretch reads MPWDTRPGRSANGGPEGPGA. The stretch at 70-99 is one ANK 1 repeat; the sequence is SPSEALLYALVHDHQAYAHYLLATFPRCAL. Residues 108–109 carry the Important role in both nutrient sensing and binding/regulation of IMPDH2 motif; it reads CC. ANK repeat units follow at residues 111-140 and 157-186; these read APGP…DFPV and GGGT…SPGL.

Part of an E3 ubiquitin-protein ligase complex with Elongin BC (ELOB and ELOC), CUL5 and ANKRD9. Interacts with IMPDH2; leading to ubiquitination of IMPDH2 and its subsequent proteasomal degradation.

The protein resides in the cytoplasmic vesicle. It localises to the cytoplasm. The protein localises to the cytosol. It participates in protein modification; protein ubiquitination. Substrate receptor subunit of a cullin-RING superfamily E3 ligase complex (CUL5-based E3 ubiquitin ligase complex) which mediates the ubiquitination and subsequent proteasomal degradation of target proteins. Depending of the metabolic state of the cell, promotes the proteasomal degradation of IMPDH2, the rate-limiting enzyme in GTP biosynthesis or protects IMPDH2 by stabilizing IMPDH2 filaments assembly. Implicated in different cellular processes, like copper homeostasis and cell proliferation. In Mus musculus (Mouse), this protein is Ankyrin repeat domain-containing protein 9 (Ankrd9).